A 398-amino-acid chain; its full sequence is Sphingosine 1-phosphate receptor 5 (398 aa).

Residues 1–40 (MEPGLLRPAPVSEVIVLHYNYTGKLRGARYQPGAGLRADA) are Extracellular-facing. N-linked (GlcNAc...) asparagine glycosylation is present at Asn20. The chain crosses the membrane as a helical span at residues 41–61 (VVCLAVCALIVLENLAVLVVL). Topologically, residues 62–70 (GRHPRFHAP) are cytoplasmic. Residues 71–91 (MFLLLGSLTLSDLLAGAAYAA) traverse the membrane as a helical segment. Topologically, residues 92–111 (NILLSGPLTLRLSPALWFAR) are extracellular. The chain crosses the membrane as a helical span at residues 112-132 (EGGVFVALAASVLSLLAIALE). Residues 133 to 151 (RLLTMERRGPAPAARRGRT) are Cytoplasmic-facing. The chain crosses the membrane as a helical span at residues 152–172 (LALAAGAWGVSLLLGLLPALG). Residues 173 to 191 (WNCLGRLEACSTVLPLYAK) are Extracellular-facing. Residues 192 to 212 (AYVLFCVLAFVGILAAICGLY) form a helical membrane-spanning segment. Residues 213–252 (ARIYCQVRAKAQRLRARPGAGEGTSARARGTPRSLALLRT) lie on the Cytoplasmic side of the membrane. The chain crosses the membrane as a helical span at residues 253 to 273 (LSVVLVAFVACWGPLFLLLLL). Residues 274-287 (DVACPARACPVLLQ) are Extracellular-facing. A helical membrane pass occupies residues 288 to 308 (ADPFLGLAMANSLLNPIIYTF). Residues 309 to 398 (TNRDLRHALL…QTLVPPPAAD (90 aa)) lie on the Cytoplasmic side of the membrane. Cys323 is lipidated: S-palmitoyl cysteine. The interval 332-398 (SGTSRSPGST…QTLVPPPAAD (67 aa)) is disordered. A compositionally biased stretch (low complexity) spans 334–343 (TSRSPGSTLG). Ser337 bears the Phosphoserine mark. Basic and acidic residues predominate over residues 359–373 (SSSRSERSSPQRDGL). Ser381 is modified (phosphoserine).

This sequence belongs to the G-protein coupled receptor 1 family.

The protein resides in the cell membrane. Functionally, receptor for the lysosphingolipid sphingosine 1-phosphate (S1P). S1P is a bioactive lysophospholipid that elicits diverse physiological effect on most types of cells and tissues. Is coupled to both the G(i/O)alpha and G(12) subclass of heteromeric G-proteins. In Sus scrofa (Pig), this protein is Sphingosine 1-phosphate receptor 5 (S1PR5).